The chain runs to 239 residues: Phosphoglycolate phosphatase (239 aa).

The Nucleophile role is filled by Asp-14. Positions 14 and 16 each coordinate Mg(2+). Lys-160 contacts substrate. Mg(2+) contacts are provided by Asp-183 and Asp-187.

This sequence belongs to the archaeal SPP-like hydrolase family. The cofactor is Mg(2+).

It catalyses the reaction 2-phosphoglycolate + H2O = glycolate + phosphate. In terms of biological role, catalyzes the dephosphorylation of 2-phosphoglycolate. This Aeropyrum pernix (strain ATCC 700893 / DSM 11879 / JCM 9820 / NBRC 100138 / K1) protein is Phosphoglycolate phosphatase.